The primary structure comprises 105 residues: DNA-directed RNA polymerase subunit omega (105 aa).

This sequence belongs to the RNA polymerase subunit omega family. The RNAP catalytic core consists of 2 alpha, 1 beta, 1 beta' and 1 omega subunit. When a sigma factor is associated with the core the holoenzyme is formed, which can initiate transcription.

The catalysed reaction is RNA(n) + a ribonucleoside 5'-triphosphate = RNA(n+1) + diphosphate. Functionally, promotes RNA polymerase assembly. Latches the N- and C-terminal regions of the beta' subunit thereby facilitating its interaction with the beta and alpha subunits. The protein is DNA-directed RNA polymerase subunit omega of Streptococcus equi subsp. zooepidemicus (strain MGCS10565).